Reading from the N-terminus, the 134-residue chain is uncharacterized protein (134 aa).

This is an uncharacterized protein from Synechococcus elongatus (strain ATCC 33912 / PCC 7942 / FACHB-805) (Anacystis nidulans R2).